We begin with the raw amino-acid sequence, 121 residues long: Small ribosomal subunit protein uS13 (121 aa).

Positions 91-121 are disordered; that stretch reads HRMSLPVRGQRTRTNARTRRGSRKTVAGRKK. The span at 100-121 shows a compositional bias: basic residues; sequence QRTRTNARTRRGSRKTVAGRKK.

Belongs to the universal ribosomal protein uS13 family. Part of the 30S ribosomal subunit. Forms a loose heterodimer with protein S19. Forms two bridges to the 50S subunit in the 70S ribosome.

In terms of biological role, located at the top of the head of the 30S subunit, it contacts several helices of the 16S rRNA. In the 70S ribosome it contacts the 23S rRNA (bridge B1a) and protein L5 of the 50S subunit (bridge B1b), connecting the 2 subunits; these bridges are implicated in subunit movement. Contacts the tRNAs in the A and P-sites. This chain is Small ribosomal subunit protein uS13, found in Prochlorococcus marinus (strain AS9601).